The following is a 369-amino-acid chain: UDP-glucose 4-epimerase 4 (369 aa).

19 to 50 (TVLVTGGAGYIGSHTVLQLLAAGFRVVVADSL) lines the NAD(+) pocket. Ser144 lines the substrate pocket. Tyr168 serves as the catalytic Proton acceptor.

This sequence belongs to the NAD(P)-dependent epimerase/dehydratase family. NAD(+) serves as cofactor.

It catalyses the reaction UDP-alpha-D-glucose = UDP-alpha-D-galactose. It participates in carbohydrate metabolism; galactose metabolism. In terms of biological role, catalyzes the interconversion between UDP-glucose and UDP-galactose. The chain is UDP-glucose 4-epimerase 4 (UGE-4) from Oryza sativa subsp. japonica (Rice).